Reading from the N-terminus, the 191-residue chain is Nucleoside triphosphate pyrophosphatase (191 aa).

Aspartate 70 (proton acceptor) is an active-site residue.

This sequence belongs to the Maf family. Requires a divalent metal cation as cofactor.

It is found in the cytoplasm. It carries out the reaction a ribonucleoside 5'-triphosphate + H2O = a ribonucleoside 5'-phosphate + diphosphate + H(+). The enzyme catalyses a 2'-deoxyribonucleoside 5'-triphosphate + H2O = a 2'-deoxyribonucleoside 5'-phosphate + diphosphate + H(+). Its function is as follows. Nucleoside triphosphate pyrophosphatase. May have a dual role in cell division arrest and in preventing the incorporation of modified nucleotides into cellular nucleic acids. The chain is Nucleoside triphosphate pyrophosphatase from Synechococcus sp. (strain WH7803).